Here is a 173-residue protein sequence, read N- to C-terminus: Glutamyl-tRNA(Gln) amidotransferase subunit C, mitochondrial (173 aa).

It belongs to the GatC family. In terms of assembly, subunit of the heterotrimeric GatCAB amidotransferase (AdT) complex, composed of A, B and C subunits.

It is found in the mitochondrion. It catalyses the reaction L-glutamyl-tRNA(Gln) + L-glutamine + ATP + H2O = L-glutaminyl-tRNA(Gln) + L-glutamate + ADP + phosphate + H(+). Its function is as follows. Allows the formation of correctly charged Gln-tRNA(Gln) through the transamidation of misacylated Glu-tRNA(Gln) in the mitochondria. The reaction takes place in the presence of glutamine and ATP through an activated gamma-phospho-Glu-tRNA(Gln). In Drosophila persimilis (Fruit fly), this protein is Glutamyl-tRNA(Gln) amidotransferase subunit C, mitochondrial.